The chain runs to 405 residues: Enoyl-[acyl-carrier-protein] reductase [NADH] (405 aa).

NAD(+) contacts are provided by residues 48–53 (GASSGY), 74–75 (FE), 111–112 (DA), and 140–141 (LA). Residue Y226 participates in substrate binding. Y236 functions as the Proton donor in the catalytic mechanism. NAD(+) is bound by residues K245 and 274–276 (VVT).

The protein belongs to the TER reductase family. In terms of assembly, monomer.

It catalyses the reaction a 2,3-saturated acyl-[ACP] + NAD(+) = a (2E)-enoyl-[ACP] + NADH + H(+). The protein operates within lipid metabolism; fatty acid biosynthesis. In terms of biological role, involved in the final reduction of the elongation cycle of fatty acid synthesis (FAS II). Catalyzes the reduction of a carbon-carbon double bond in an enoyl moiety that is covalently linked to an acyl carrier protein (ACP). This is Enoyl-[acyl-carrier-protein] reductase [NADH] from Xanthomonas oryzae pv. oryzae (strain PXO99A).